We begin with the raw amino-acid sequence, 652 residues long: Putative asparagine synthetase [glutamine-hydrolyzing] (652 aa).

Catalysis depends on cysteine 2, which acts as the For GATase activity. The Glutamine amidotransferase type-2 domain maps to 2–231; it reads CGLLAFVAAP…SGCFARIRAD (230 aa). L-glutamine contacts are provided by residues 60 to 64, 89 to 91, and aspartate 115; these read RLSII and NGE. An ATP-binding site is contributed by 382-383; sequence SG.

The protein belongs to the asparagine synthetase family.

It carries out the reaction L-aspartate + L-glutamine + ATP + H2O = L-asparagine + L-glutamate + AMP + diphosphate + H(+). The protein operates within amino-acid biosynthesis; L-asparagine biosynthesis; L-asparagine from L-aspartate (L-Gln route): step 1/1. In Mycobacterium bovis (strain ATCC BAA-935 / AF2122/97), this protein is Putative asparagine synthetase [glutamine-hydrolyzing] (asnB).